The following is a 138-amino-acid chain: Cell death protein Grim (138 aa).

2 disordered regions span residues 21 to 71 and 119 to 138; these read NGQQ…SVPL and SSGGQNNDEDDVTDATSKEN. Low complexity predominate over residues 23-51; the sequence is QQTAASPRTTATAAAPSQQQQQSQQQQQQ.

As to quaternary structure, interacts with Diap2 (via BIR2 domain).

Its function is as follows. Activator of apoptosis, independent of rpr and hid, that acts on the effector Dredd. In Drosophila melanogaster (Fruit fly), this protein is Cell death protein Grim (grim).